Consider the following 213-residue polypeptide: Putative tRNA methyltransferase MPN_351 (213 aa).

This sequence belongs to the TrmK family.

Its subcellular location is the cytoplasm. This is Putative tRNA methyltransferase MPN_351 from Mycoplasma pneumoniae (strain ATCC 29342 / M129 / Subtype 1) (Mycoplasmoides pneumoniae).